The sequence spans 368 residues: Uroporphyrinogen decarboxylase (368 aa).

Substrate contacts are provided by residues 41–45, aspartate 91, tyrosine 168, serine 223, and histidine 345; that span reads RQAGR.

Belongs to the uroporphyrinogen decarboxylase family. In terms of assembly, homodimer.

Its subcellular location is the cytoplasm. The enzyme catalyses uroporphyrinogen III + 4 H(+) = coproporphyrinogen III + 4 CO2. It functions in the pathway porphyrin-containing compound metabolism; protoporphyrin-IX biosynthesis; coproporphyrinogen-III from 5-aminolevulinate: step 4/4. In terms of biological role, catalyzes the decarboxylation of four acetate groups of uroporphyrinogen-III to yield coproporphyrinogen-III. In Psychrobacter sp. (strain PRwf-1), this protein is Uroporphyrinogen decarboxylase.